A 385-amino-acid polypeptide reads, in one-letter code: UPF0284 protein P9215_05181 (385 aa).

Belongs to the UPF0284 family.

The protein is UPF0284 protein P9215_05181 of Prochlorococcus marinus (strain MIT 9215).